A 97-amino-acid polypeptide reads, in one-letter code: NADH-ubiquinone oxidoreductase chain 4L (97 aa).

3 consecutive transmembrane segments (helical) span residues 1–21 (MSYLILSIVILLIGILGIILN), 25–45 (LIIMLMCVELVLLASTILLLF), and 57–77 (IFAIVILTVAAAESAIGLAIM).

Belongs to the complex I subunit 4L family.

It localises to the mitochondrion membrane. The enzyme catalyses a ubiquinone + NADH + 5 H(+)(in) = a ubiquinol + NAD(+) + 4 H(+)(out). Its function is as follows. Core subunit of the mitochondrial membrane respiratory chain NADH dehydrogenase (Complex I) that is believed to belong to the minimal assembly required for catalysis. Complex I functions in the transfer of electrons from NADH to the respiratory chain. The immediate electron acceptor for the enzyme is believed to be ubiquinone. The sequence is that of NADH-ubiquinone oxidoreductase chain 4L (ND4L) from Sarcophyton glaucum (Toadstool umbrella leather coral).